The following is a 445-amino-acid chain: Bifunctional protein GlmU (445 aa).

The interval 1–218 (MRALVLAAGK…LLEITGVNTR (218 aa)) is pyrophosphorylase. UDP-N-acetyl-alpha-D-glucosamine-binding positions include 6–9 (LAAG), Lys20, Gln69, 74–75 (GT), 96–98 (YGD), Gly134, Glu147, Asn162, and Asn216. Asp98 serves as a coordination point for Mg(2+). Residue Asn216 coordinates Mg(2+). The tract at residues 219–239 (KTLVWLEEQLRMRKIEELLEN) is linker. The interval 240-445 (GVTILDPATT…GWVLKKRKEE (206 aa)) is N-acetyltransferase. UDP-N-acetyl-alpha-D-glucosamine contacts are provided by Arg321 and Lys339. Residue His351 is the Proton acceptor of the active site. UDP-N-acetyl-alpha-D-glucosamine is bound by residues Tyr354 and Asn365. Residues Ala368, 374–375 (NY), Ser393, Ala411, and Arg428 contribute to the acetyl-CoA site.

It in the N-terminal section; belongs to the N-acetylglucosamine-1-phosphate uridyltransferase family. In the C-terminal section; belongs to the transferase hexapeptide repeat family. In terms of assembly, homotrimer. Mg(2+) is required as a cofactor.

It is found in the cytoplasm. The enzyme catalyses alpha-D-glucosamine 1-phosphate + acetyl-CoA = N-acetyl-alpha-D-glucosamine 1-phosphate + CoA + H(+). It carries out the reaction N-acetyl-alpha-D-glucosamine 1-phosphate + UTP + H(+) = UDP-N-acetyl-alpha-D-glucosamine + diphosphate. The protein operates within nucleotide-sugar biosynthesis; UDP-N-acetyl-alpha-D-glucosamine biosynthesis; N-acetyl-alpha-D-glucosamine 1-phosphate from alpha-D-glucosamine 6-phosphate (route II): step 2/2. It functions in the pathway nucleotide-sugar biosynthesis; UDP-N-acetyl-alpha-D-glucosamine biosynthesis; UDP-N-acetyl-alpha-D-glucosamine from N-acetyl-alpha-D-glucosamine 1-phosphate: step 1/1. Its pathway is bacterial outer membrane biogenesis; LPS lipid A biosynthesis. Its function is as follows. Catalyzes the last two sequential reactions in the de novo biosynthetic pathway for UDP-N-acetylglucosamine (UDP-GlcNAc). The C-terminal domain catalyzes the transfer of acetyl group from acetyl coenzyme A to glucosamine-1-phosphate (GlcN-1-P) to produce N-acetylglucosamine-1-phosphate (GlcNAc-1-P), which is converted into UDP-GlcNAc by the transfer of uridine 5-monophosphate (from uridine 5-triphosphate), a reaction catalyzed by the N-terminal domain. This Thermotoga petrophila (strain ATCC BAA-488 / DSM 13995 / JCM 10881 / RKU-1) protein is Bifunctional protein GlmU.